The sequence spans 446 residues: MQESQETHMSSHLDEVIAAVSVTSKNRLSNKLLQTALFQPPREKLHLCEERAKSYSSIREYKQAIQELVRCVALTKICYGDSHWKLAEAYVNLAQGYLQLKGLSLQAKQHAEKAKEILANSMESPYYNKTDIFKCSLELFYTLGKALVSLQKFKEAWENLIKAERLSKEMLQCGNIIKEEWIEIQSRIKLSFAQLYQGQKRSKEAFPYYQKALEYTETTKDEKSFECAQVLREMAGVEQALALHDASIGHFSQAHLIILSKEPSPEDAADSALSIARAAVASGMHDHHDVAEKYFQESMTYLKDSEGTEKAKFLSIQDEFCSFLQTIGQKERAAMILRESLEAKIGVFGDFSPEVAETYRILGRADLAQGNNNGAHMKLKKCVQIETFLYGSQDKKTMATQQTIDTLSKISETPVKSKQSLKAKTAFCTSVPQYVTPGKARHSAAE.

4 TPR repeats span residues 45 to 78 (LHLC…TKIC), 137 to 170 (LELF…SKEM), 186 to 219 (SRIK…TETT), and 356 to 389 (AETY…ETFL).

Associated with the EvC complex composed of EFCAB7, IQCE, EVC2 and EVC.

It localises to the cell projection. It is found in the cilium. Participates positively in the ciliary Hedgehog (Hh) signaling. In Rattus norvegicus (Rat), this protein is Tetratricopeptide repeat protein 23 (Ttc23).